A 253-amino-acid polypeptide reads, in one-letter code: Zinc finger protein GIS (253 aa).

Acidic residues predominate over residues 1–10 (MDEATGETET). Residues 1–85 (MDEATGETET…GDNSTDNNSI (85 aa)) form a disordered region. 3 stretches are compositionally biased toward polar residues: residues 11–21 (QDFMNVESFSQ), 49–63 (SITTGQEDYTDPYQT), and 76–85 (GDNSTDNNSI). Residues 91-113 (FECHYCFRNFPTSQALGGHQNAH) form a C2H2-type zinc finger.

In terms of tissue distribution, expressed in inflorescence meristems, floral meristems and stem epidermis.

It is found in the nucleus. Functionally, probable transcription factor required for the initiation of inflorescence trichomes in response to gibberellin (GA). Mediates the induction of GL1 expression by GA in inflorescence organs and is antagonized in its action by the DELLA repressor GAI. Acts upstream of the trichome initiation regulators GL1 and GL3, and downstream of the GA signaling repressor SPINDLY (SPY). Does not play a significant role in the cytokinin response. Controls trichome branching through GA signaling. Acts downstream of the key regulator STICHEL (STI) in an endoreduplication-independent pathway. Controls trichome cell division indirectly by acting downstream of a key endoreduplication regulator SIAMESE (SIM). This Arabidopsis thaliana (Mouse-ear cress) protein is Zinc finger protein GIS (GIS).